The primary structure comprises 190 residues: Threonylcarbamoyl-AMP synthase (190 aa).

The YrdC-like domain occupies 7–190 (GDAIAAAIDV…ALTGELFRQG (184 aa)).

This sequence belongs to the SUA5 family. TsaC subfamily.

The protein resides in the cytoplasm. It carries out the reaction L-threonine + hydrogencarbonate + ATP = L-threonylcarbamoyladenylate + diphosphate + H2O. In terms of biological role, required for the formation of a threonylcarbamoyl group on adenosine at position 37 (t(6)A37) in tRNAs that read codons beginning with adenine. Catalyzes the conversion of L-threonine, HCO(3)(-)/CO(2) and ATP to give threonylcarbamoyl-AMP (TC-AMP) as the acyladenylate intermediate, with the release of diphosphate. The chain is Threonylcarbamoyl-AMP synthase from Escherichia coli O6:H1 (strain CFT073 / ATCC 700928 / UPEC).